Consider the following 709-residue polypeptide: Polyribonucleotide nucleotidyltransferase (709 aa).

2 residues coordinate Mg(2+): aspartate 485 and aspartate 491. The KH domain maps to 552–611; the sequence is PRIYTMKIDPKKIKDVIGKGGATIRSLTEETGTSIDIDDDGTVKIAAVDSNAAKNVMGRI. Residues 621 to 689 form the S1 motif domain; that stretch reads GAIYKGKVTR…RQGRIRLTMK (69 aa).

It belongs to the polyribonucleotide nucleotidyltransferase family. In terms of assembly, component of the RNA degradosome, which is a multiprotein complex involved in RNA processing and mRNA degradation. Mg(2+) is required as a cofactor.

The protein localises to the cytoplasm. It carries out the reaction RNA(n+1) + phosphate = RNA(n) + a ribonucleoside 5'-diphosphate. Its function is as follows. Involved in mRNA degradation. Catalyzes the phosphorolysis of single-stranded polyribonucleotides processively in the 3'- to 5'-direction. In Haemophilus influenzae (strain 86-028NP), this protein is Polyribonucleotide nucleotidyltransferase.